The primary structure comprises 397 residues: tRNA (guanine-N(7)-)-methyltransferase non-catalytic subunit wuho (397 aa).

4 WD repeats span residues 75–115, 163–202, 206–244, and 303–343; these read KVEV…AQLL, GHLS…DIHS, GHKE…ELLL, and AGTW…RASG.

Belongs to the WD repeat TRM82 family. In terms of assembly, forms a heterodimer with the catalytic subunit Mettl1. Interacts with mei-P26 and weakly interacts with bgcn; required for the function or formation of the mei-P26-bgcn-bam-sxl complex. Interacts with nanos; may be involved in mei-P26-dependent derepression of the BMP signaling pathway. Interacts with Myc; the interaction may be mediated by mei-P26 and may be involved in the regulation of ribosome biogenesis. As to expression, in testis, it is present at high level in hub cells, a niche for germline stem cells of testis. Ubiquitously expressed in all testicular cells throughout spermatogenesis. Ubiquitously expressed in all germline and somatic cells of the ovary.

It is found in the nucleus. The protein resides in the cytoplasm. The protein operates within tRNA modification; N(7)-methylguanine-tRNA biosynthesis. Functionally, required for the Mettl1-dependent formation of N(7)-methylguanine at position 46 (m7G46) in tRNA. In the Mettl1-wuho methyltransferase complex, it is required to stabilize and induce conformational changes of the catalytic subunit. Required for binding of nanos mRNA and repression of translation by the mei-P26-bgcn-bam-sxl complex. May cooperate with mei-P26 and nanos to derepress the BMP signaling pathway. May cooperate with mei-P26 to suppress expression of a subset of microRNAs. May cooperate with mei-P26 to regulate bam expression levels in germline cells during gametogenesis. Required to promote mitosis to meiosis transition during gametogenesis. May regulate germline cell division in part by regulating ribosome biogenesis. This is tRNA (guanine-N(7)-)-methyltransferase non-catalytic subunit wuho from Drosophila persimilis (Fruit fly).